A 444-amino-acid polypeptide reads, in one-letter code: 23S rRNA (uracil(1939)-C(5))-methyltransferase RlmD (444 aa).

Residues 5–64 (KPKLNLTSQTARIVNLSHDGRGIARVNGKATFIQGALPGEVVEFQYTRVKKDFDEGKLLS) enclose the TRAM domain. C77, C83, C86, and C166 together coordinate [4Fe-4S] cluster. S-adenosyl-L-methionine contacts are provided by Q276, F305, N310, E326, N353, and D374. The Nucleophile role is filled by C400.

This sequence belongs to the class I-like SAM-binding methyltransferase superfamily. RNA M5U methyltransferase family. RlmD subfamily.

It catalyses the reaction uridine(1939) in 23S rRNA + S-adenosyl-L-methionine = 5-methyluridine(1939) in 23S rRNA + S-adenosyl-L-homocysteine + H(+). Functionally, catalyzes the formation of 5-methyl-uridine at position 1939 (m5U1939) in 23S rRNA. In Legionella pneumophila (strain Paris), this protein is 23S rRNA (uracil(1939)-C(5))-methyltransferase RlmD.